Reading from the N-terminus, the 154-residue chain is Secreted RxLR effector protein PITG_21681 (154 aa).

A signal peptide spans 1–20; it reads MRRYAALMVIDAVLLSTSQA. Residues 42-70 form a disordered region; the sequence is SAERDGGIPNKRSLRRISVTESNDGERDE. The RxLR-dEER motif lies at 53-72; sequence RSLRRISVTESNDGERDEER.

It belongs to the RxLR effector family.

The protein localises to the secreted. It is found in the host cell. In terms of biological role, secreted effector that is involved in host plant infection. Increases the susceptibility to P.infestans and reduces the plant growth. Affects the expression of host genes. The polypeptide is Secreted RxLR effector protein PITG_21681 (Phytophthora infestans (strain T30-4) (Potato late blight agent)).